A 900-amino-acid polypeptide reads, in one-letter code: Probable 2-oxoadipate dehydrogenase complex component E1 homolog (900 aa).

This sequence belongs to the alpha-ketoglutarate dehydrogenase family. It depends on thiamine diphosphate as a cofactor.

It localises to the mitochondrion. The catalysed reaction is N(6)-[(R)-lipoyl]-L-lysyl-[protein] + 2-oxoadipate + H(+) = N(6)-[(R)-S(8)-glutaryldihydrolipoyl]-L-lysyl-[protein] + CO2. Functionally, 2-oxoadipate dehydrogenase (E1a) component of the 2-oxoadipate dehydrogenase complex (OADHC). Participates in the first step, rate limiting for the overall conversion of 2-oxoadipate (alpha-ketoadipate) to glutaryl-CoA and CO(2) catalyzed by the whole OADHC. Catalyzes the irreversible decarboxylation of 2-oxoadipate via the thiamine diphosphate (ThDP) cofactor and subsequent transfer of the decarboxylated acyl intermediate on an oxidized dihydrolipoyl group that is covalently amidated to the E2 enzyme (dihydrolipoyllysine-residue succinyltransferase or DLST). In Dictyostelium discoideum (Social amoeba), this protein is Probable 2-oxoadipate dehydrogenase complex component E1 homolog (odhA).